Consider the following 203-residue polypeptide: Secreted RxLR effector protein RXLR-C28 (203 aa).

The N-terminal stretch at 1–24 (MKAVKLTAAVVVLFMAPYVPITSS) is a signal peptide. Asn-32 carries N-linked (GlcNAc...) asparagine glycosylation. Residues 37–40 (RHLR) carry the RxLR motif. Residue Asn-193 is glycosylated (N-linked (GlcNAc...) asparagine).

Belongs to the RxLR effector family.

The protein localises to the secreted. The protein resides in the host cytoplasm. Its function is as follows. Secreted effector that does not suppress pattern-triggered immunity (PTI) in plant host. The sequence is that of Secreted RxLR effector protein RXLR-C28 from Plasmopara halstedii (Downy mildew of sunflower).